The following is a 343-amino-acid chain: MSKKITIVDTTLRDGMSSVSHQFTPQNVADIARGLDKAGVPTIEVAHGIGLGASSIQYGFAAATDPDYVRAAVDAVENADIAALYVPGIATLAELQQAIDAGIKTVRVAVHCTEADCGQQPVEWAKEHGLTVMTFLMMSHKLDPQPLAEQAAKLDSYGADVVYVVDSAGAMVPRHAGERVAALRQAITADIGFHAHNNLGVGIANALTAAENGATFIDGSLRGLGASAGNAQTEVLAAAFERAGWDTGVDLFPLIDTAEHVVAPLMKEPQIVDETALVLGYAGVYSTFFHPTKRAAKKFGVPARDILMELGRRGVIGGQEDMIIDVASELAGRTYETPAPAGV.

The region spanning 5-255 (ITIVDTTLRD…DTGVDLFPLI (251 aa)) is the Pyruvate carboxyltransferase domain. Substrate-binding positions include 13 to 14 (RD), S167, and H194. D14 lines the Mn(2+) pocket. Mn(2+) is bound by residues H194 and H196. Residue Y285 coordinates substrate.

It belongs to the 4-hydroxy-2-oxovalerate aldolase family.

It carries out the reaction (S)-4-hydroxy-2-oxopentanoate = acetaldehyde + pyruvate. The chain is 4-hydroxy-2-oxovalerate aldolase 2 from Rhodococcus jostii (strain RHA1).